Reading from the N-terminus, the 977-residue chain is Serine/threonine-protein kinase/endoribonuclease IRE1 (977 aa).

Residues 1-18 (MPARRLLLLLTLLLPGLG) form the signal peptide. Topologically, residues 19–443 (IFGSTSTVTL…EAPVDSMLKD (425 aa)) are lumenal. Asn-176 carries an N-linked (GlcNAc...) asparagine glycan. Residues 410–419 (TSENAPTTVS) show a composition bias toward polar residues. Residues 410 to 434 (TSENAPTTVSRDVEEKPAHAPARPE) are disordered. A helical membrane pass occupies residues 444-464 (MATIILSTFLLIGWVAFIITY). The Cytoplasmic portion of the chain corresponds to 465 to 977 (PLSMHQQQQL…PQPPVTPDAL (513 aa)). The tract at residues 491–559 (QQQQQLPFHP…PSLEQDDGDE (69 aa)) is disordered. Over residues 513–552 (TSGPYSESSGTSSPSTSPRASNHSLCSGSSASKAGSSPSL) the composition is skewed to low complexity. The Protein kinase domain occupies 571–832 (FCPKDVLGHG…AKHVLKHPFF (262 aa)). ATP contacts are provided by residues 577-585 (LGHGAEGTI), Lys-599, and 643-645 (ELC). The active-site Proton acceptor is the Asp-688. ATP is bound by residues 690 to 693 (KPHN) and Asp-711. Residues Ser-724 and Ser-729 each carry the phosphoserine modification. The 129-residue stretch at 835–963 (LEKQLQFFQD…ERLFQPYYFH (129 aa)) folds into the KEN domain. Positions 906–907 (NK) are interacts with hydroxy-aryl-aldehyde inhibitors. Thr-973 carries the phosphothreonine modification.

The protein belongs to the protein kinase superfamily. Ser/Thr protein kinase family. As to quaternary structure, monomer. Homodimer; disulfide-linked; homodimerization takes place in response to endoplasmic reticulum stress and promotes activation of the kinase and endoribonuclease activities. Dimer formation is driven by hydrophobic interactions within the N-terminal luminal domains and stabilized by disulfide bridges. Interacts (via the luminal region) with DNAJB9/ERdj4; interaction takes place in unstressed cells and promotes recruitment of HSPA5/BiP. Interacts (via the luminal region) with HSPA5/BiP; HSPA5/BiP is a negative regulator of the unfolded protein response (UPR) that prevents homodimerization of ERN1/IRE1 and subsequent activation of the protein. Interaction with HSPA5 also competitively inhibits ERN1 interaction with MANF. Interacts with PDIA6, a negative regulator of the UPR; the interaction is direct and disrupts homodimerization. Interacts with DAB2IP (via PH domain); the interaction occurs in a endoplasmic reticulum stress-induced dependent manner and is required for subsequent recruitment of TRAF2 to ERN1/IRE1. Interacts with TAOK3 and TRAF2. Interacts with RNF13. Interacts with LACC1. Interacts (when unphosphorylated) with DDRGK1; interaction is dependent on UFM1 and takes place in response to endoplasmic reticulum stress, regulating ERN1/IRE1-alpha stability. Interacts (via N-terminus) with P4HB/PDIA1; the interaction is enhanced by phosphorylation of P4HB by FAM20C in response to endoplasmic reticulum stress and results in attenuation of ERN1 activity. Interacts with TMBIM6; this interaction inhibits ERN1 activity. Interacts (via luminal domain) with MANF (via C-terminus); the interaction is decreased in the presence of increasing concentrations of Ca(2+). Requires Mg(2+) as cofactor. In terms of processing, autophosphorylated following homodimerization. Autophosphorylation promotes activation of the endoribonuclease domain. In response to ER stress, phosphorylated at Ser-724, Ser-729 and possibly Ser-726; phosphorylation promotes oligomerization and endoribonuclease activity. Dephosphorylated at Ser-724, Ser-729 and possibly Ser-726 by RPAP2 to abort failed ER-stress adaptation and trigger apoptosis. Phosphorylated at Ser-724; in response to the ER stressor tunicamycin. Post-translationally, ADP-ribosylated by PARP16 upon ER stress, which increases both kinase and endonuclease activities. Ubiquitously expressed. High levels observed in pancreatic tissue.

It is found in the endoplasmic reticulum membrane. The enzyme catalyses L-seryl-[protein] + ATP = O-phospho-L-seryl-[protein] + ADP + H(+). The catalysed reaction is L-threonyl-[protein] + ATP = O-phospho-L-threonyl-[protein] + ADP + H(+). With respect to regulation, the kinase domain is activated by trans-autophosphorylation following homodimerization. Kinase activity is required for activation of the endoribonuclease domain. Endoribonuclease activity is specifically inhibited by hydroxy-aryl-aldehydes (HAA). Its function is as follows. Serine/threonine-protein kinase and endoribonuclease that acts as a key sensor for the endoplasmic reticulum unfolded protein response (UPR). In unstressed cells, the endoplasmic reticulum luminal domain is maintained in its inactive monomeric state by binding to the endoplasmic reticulum chaperone HSPA5/BiP. Accumulation of misfolded proteins in the endoplasmic reticulum causes release of HSPA5/BiP, allowing the luminal domain to homodimerize, promoting autophosphorylation of the kinase domain and subsequent activation of the endoribonuclease activity. The endoribonuclease activity is specific for XBP1 mRNA and excises 26 nucleotides from XBP1 mRNA. The resulting spliced transcript of XBP1 encodes a transcriptional activator protein that up-regulates expression of UPR target genes. Acts as an upstream signal for ER stress-induced GORASP2-mediated unconventional (ER/Golgi-independent) trafficking of CFTR to cell membrane by modulating the expression and localization of SEC16A. The protein is Serine/threonine-protein kinase/endoribonuclease IRE1 of Homo sapiens (Human).